Consider the following 337-residue polypeptide: Aspartate carbamoyltransferase catalytic subunit (337 aa).

Positions 59 and 60 each coordinate carbamoyl phosphate. An L-aspartate-binding site is contributed by Lys-87. Residues Arg-109, His-142, and Gln-145 each contribute to the carbamoyl phosphate site. Residues Arg-182 and Arg-253 each contribute to the L-aspartate site. Residues Gly-294 and Pro-295 each coordinate carbamoyl phosphate.

It belongs to the aspartate/ornithine carbamoyltransferase superfamily. ATCase family. In terms of assembly, heterododecamer (2C3:3R2) of six catalytic PyrB chains organized as two trimers (C3), and six regulatory PyrI chains organized as three dimers (R2).

The enzyme catalyses carbamoyl phosphate + L-aspartate = N-carbamoyl-L-aspartate + phosphate + H(+). The protein operates within pyrimidine metabolism; UMP biosynthesis via de novo pathway; (S)-dihydroorotate from bicarbonate: step 2/3. Catalyzes the condensation of carbamoyl phosphate and aspartate to form carbamoyl aspartate and inorganic phosphate, the committed step in the de novo pyrimidine nucleotide biosynthesis pathway. The sequence is that of Aspartate carbamoyltransferase catalytic subunit from Prochlorococcus marinus (strain MIT 9211).